The following is a 387-amino-acid chain: Protein salvador homolog 1 (387 aa).

A phosphoserine mark is found at Ser-95 and Ser-138. 2 consecutive WW domains span residues 201–234 (LPLPPGWSVDWTMRGRKYYIDHNTNTTHWSHPLE) and 236–269 (EGLPPGWERVESSEFGTYYVDHTNKRAQYRHPCA). The residue at position 212 (Thr-212) is a Phosphothreonine. Residues 323-370 (ILKWELFQLADLDTYQGMLKLLFMKELEQIVKLYEAYRQALVTELENR) enclose the SARAH domain.

Homodimer. Stabilized through interaction with STK3/MST2 or STK4/MST1. Interacts (via SARAH domain) with isoform 1 of NEK2. Interacts with ESR1 only in the presence of STK3/MST2. Interacts with WTIP and AJUBA. In terms of processing, phosphorylated by STK3/MST2 and STK4/MST1. Phosphorylation is not required for SAV1 stability and may increase the number of protein binding sites on the scaffold molecule.

It localises to the nucleus. It is found in the cytoplasm. Its function is as follows. Regulator of STK3/MST2 and STK4/MST1 in the Hippo signaling pathway which plays a pivotal role in organ size control and tumor suppression by restricting proliferation and promoting apoptosis. The core of this pathway is composed of a kinase cascade wherein STK3/MST2 and STK4/MST1, in complex with its regulatory protein SAV1, phosphorylates and activates LATS1/2 in complex with its regulatory protein MOB1, which in turn phosphorylates and inactivates YAP1 oncoprotein and WWTR1/TAZ. Phosphorylation of YAP1 by LATS1/2 inhibits its translocation into the nucleus to regulate cellular genes important for cell proliferation, cell death, and cell migration. SAV1 is required for STK3/MST2 and STK4/MST1 activation and promotes cell-cycle exit and terminal differentiation in developing epithelial tissues. Plays a role in centrosome disjunction by regulating the localization of NEK2 to centrosomes, and its ability to phosphorylate CROCC and CEP250. In conjunction with STK3/MST2, activates the transcriptional activity of ESR1 through the modulation of its phosphorylation. This is Protein salvador homolog 1 from Rattus norvegicus (Rat).